Here is a 236-residue protein sequence, read N- to C-terminus: 1-(5-phosphoribosyl)-5-[(5-phosphoribosylamino)methylideneamino] imidazole-4-carboxamide isomerase (236 aa).

The active-site Proton acceptor is the D8. D127 functions as the Proton donor in the catalytic mechanism.

It belongs to the HisA/HisF family.

Its subcellular location is the cytoplasm. The enzyme catalyses 1-(5-phospho-beta-D-ribosyl)-5-[(5-phospho-beta-D-ribosylamino)methylideneamino]imidazole-4-carboxamide = 5-[(5-phospho-1-deoxy-D-ribulos-1-ylimino)methylamino]-1-(5-phospho-beta-D-ribosyl)imidazole-4-carboxamide. The protein operates within amino-acid biosynthesis; L-histidine biosynthesis; L-histidine from 5-phospho-alpha-D-ribose 1-diphosphate: step 4/9. The protein is 1-(5-phosphoribosyl)-5-[(5-phosphoribosylamino)methylideneamino] imidazole-4-carboxamide isomerase of Campylobacter hominis (strain ATCC BAA-381 / DSM 21671 / CCUG 45161 / LMG 19568 / NCTC 13146 / CH001A).